The chain runs to 552 residues: Phosphoglucomutase (552 aa).

Residue Ser143 is the Phosphoserine intermediate of the active site. Residues Ser143, Asp295, Asp297, and Asp299 each coordinate Mg(2+).

This sequence belongs to the phosphohexose mutase family. Requires Mg(2+) as cofactor.

The catalysed reaction is alpha-D-glucose 1-phosphate = alpha-D-glucose 6-phosphate. Its pathway is glycolipid metabolism; diglucosyl-diacylglycerol biosynthesis. Its function is as follows. Catalyzes the interconversion between glucose-6-phosphate and alpha-glucose-1-phosphate. This is the first step in the biosynthesis of diglucosyl-diacylglycerol (Glc2-DAG), i.e. the predominant glycolipid found in the S.aureus membrane, which is also used as a membrane anchor for lipoteichoic acid (LTA). This chain is Phosphoglucomutase (pgcA), found in Staphylococcus aureus (strain USA300).